We begin with the raw amino-acid sequence, 147 residues long: Large ribosomal subunit protein bL9 (147 aa).

The protein belongs to the bacterial ribosomal protein bL9 family.

Binds to the 23S rRNA. In Sulfurovum sp. (strain NBC37-1), this protein is Large ribosomal subunit protein bL9.